The sequence spans 412 residues: Protein ALF (412 aa).

Disordered stretches follow at residues 1–47 (MDPE…PLPP) and 154–234 (GLSE…GISE). Residues 31-47 (PPQPPPPPLPPPQPLPP) are compositionally biased toward pro residues. Over residues 187–196 (MRQRRRKKVV) the composition is skewed to basic residues. Residues 206-221 (MEEDEDTEEGQEDNED) are compositionally biased toward acidic residues. DNA-binding regions lie at residues 237 to 241 (REHPF), 306 to 313 (NKPKMRHY), and 377 to 380 (YVPT).

It belongs to the FLO/LFY family. In terms of tissue distribution, expressed in the floral meristem and also in the vegetative meristem.

It localises to the nucleus. In terms of biological role, probable transcription factor required for the specification of floral meristem identity. The protein is Protein ALF (ALF) of Petunia hybrida (Petunia).